Consider the following 206-residue polypeptide: Flavin prenyltransferase UbiX (206 aa).

Residues 14–16 (GAS), Thr40, 101–104 (SMGT), and Arg136 each bind FMN. Positions 166 and 182 each coordinate dimethylallyl phosphate.

The protein belongs to the UbiX/PAD1 family.

It carries out the reaction dimethylallyl phosphate + FMNH2 = prenylated FMNH2 + phosphate. Flavin prenyltransferase that catalyzes the synthesis of the prenylated FMN cofactor (prenyl-FMN) for 4-hydroxy-3-polyprenylbenzoic acid decarboxylase UbiD. The prenyltransferase is metal-independent and links a dimethylallyl moiety from dimethylallyl monophosphate (DMAP) to the flavin N5 and C6 atoms of FMN. This chain is Flavin prenyltransferase UbiX, found in Halalkalibacterium halodurans (strain ATCC BAA-125 / DSM 18197 / FERM 7344 / JCM 9153 / C-125) (Bacillus halodurans).